Here is a 90-residue protein sequence, read N- to C-terminus: Phosphocarrier protein NPr (90 aa).

The HPr domain occupies 2-90 (TQYRRVAIKN…ALFESGFDED (89 aa)). His-16 functions as the Pros-phosphohistidine intermediate in the catalytic mechanism.

Belongs to the HPr family.

The protein resides in the cytoplasm. Its function is as follows. Component of the phosphoenolpyruvate-dependent nitrogen-metabolic phosphotransferase system (nitrogen-metabolic PTS), that seems to be involved in regulating nitrogen metabolism. The phosphoryl group from phosphoenolpyruvate (PEP) is transferred to the phosphoryl carrier protein NPr by enzyme I-Ntr. Phospho-NPr then transfers it to EIIA-Ntr. Could function in the transcriptional regulation of sigma-54 dependent operons in conjunction with the NPr (PtsO) and EIIA-Ntr (PtsN) proteins. This is Phosphocarrier protein NPr (ptsO) from Proteus mirabilis (strain HI4320).